We begin with the raw amino-acid sequence, 392 residues long: MGYYSLTETTAIQYAKEHGYFEKKANVVCHEIGDGNLNYVFKLDDGEKSIIIKQALPYAKVVGESWPLSIKRATIESKALQIFAKYVPDYVPVVYSHDEELAVTVIEDLSRLTITRKGLIDGEGYPLLSQHIGRFLAHVLFYTSDFGLQSEEKRVLEGTFVNPDLSKITEDLVFTDPFGHYDTNDYESDLQSVIDELWSDKTLKLKVAQYKYKFLTRKEALIHGDLHTGSIFSSPSETKVIDPEFATYGPFGFDIGQFIANLLLNALSREEEKRSVLFFHIEKTWSYFVENFTKLWIGEGVEAYTKEKQWLPIILQNIFTDAVGFAGCELIRRTIGLAHVADLDGIANKENRIQAKKQALSLGRELIKYEAKCADIQLFRTLFQQTVGGVKA.

Residues N38, K53, and 107–109 (EDL) contribute to the ATP site. Substrate is bound at residue D225. 242 to 244 (DPE) is a binding site for ATP. Substrate is bound at residue R332.

This sequence belongs to the methylthioribose kinase family. Homodimer.

The enzyme catalyses 5-(methylsulfanyl)-D-ribose + ATP = 5-(methylsulfanyl)-alpha-D-ribose 1-phosphate + ADP + H(+). It participates in amino-acid biosynthesis; L-methionine biosynthesis via salvage pathway; S-methyl-5-thio-alpha-D-ribose 1-phosphate from S-methyl-5'-thioadenosine (hydrolase route): step 2/2. In terms of biological role, catalyzes the phosphorylation of methylthioribose into methylthioribose-1-phosphate. In Bacillus mycoides (strain KBAB4) (Bacillus weihenstephanensis), this protein is Methylthioribose kinase.